The primary structure comprises 518 residues: uncharacterized protein (518 aa).

14 consecutive transmembrane segments (helical) span residues 13-33 (WAIS…GIIS), 49-69 (WGSW…PIVG), 86-106 (CLFG…LFLI), 109-129 (LIQA…ILAT), 141-161 (LLGA…SFLL), 169-189 (WLFL…ACFI), 202-222 (AAGI…MTNL), 231-251 (LGNP…AALI), 280-300 (LIIG…PSYV), 312-332 (GYWM…GGAL), 341-361 (TVIL…LWVT), 365-385 (EFVI…GAPL), 410-430 (IGLT…FDQI), and 493-513 (LYAA…IPAF).

It belongs to the major facilitator superfamily. TCR/Tet family.

It localises to the cell membrane. This is an uncharacterized protein from Bacillus subtilis (strain 168).